A 365-amino-acid polypeptide reads, in one-letter code: MSDEIVTNKSVTYVNNTTPVTITXSELDLRSCYQDDEVVIEVHAAALNPIDFITHQLCNSYIFGKYPKTYSRDYSGVIIKAGKDVDNRWKVGDKVNGMYSHIYGERGTLTHYLILNPAKDIPITHMVEVPKDENDPYDDFVYAAAWPLTFGTAFSTLYDFKKDWTSDSKVLVIGASTSVSYAFVHIAKNYFNIGTVVGICSKNSIERNKKLGYDYLVPYDEGSIVENVKKLKQIVLENDKFDMIXDSVGNHDFFPVIDQFLKPKAKNSFYVTIAGNNKANYKNISWRDFVSLSSILKAINPFKKYNWRFGHPYPPNNFIEVGNEMIKKGTYKPPIDSVYEFDQYKEAIDRLMSNRAKGKVVVKMK.

This sequence belongs to the YIM1 family.

It localises to the lipid droplet. It is found in the mitochondrion. The protein is Protein YIM1 (YIM1) of Saccharomyces cerevisiae (strain FostersO) (Baker's yeast).